The following is a 319-amino-acid chain: DNA-directed RNA polymerase subunit alpha (319 aa).

An alpha N-terminal domain (alpha-NTD) region spans residues 1–227 (MKEFIFPMKI…KHMNMLTNIS (227 aa)). The segment at 242-319 (LMEKLTFSIE…NIGEQRSSEV (78 aa)) is alpha C-terminal domain (alpha-CTD).

It belongs to the RNA polymerase alpha chain family. In terms of assembly, homodimer. The RNAP catalytic core consists of 2 alpha, 1 beta, 1 beta' and 1 omega subunit. When a sigma factor is associated with the core the holoenzyme is formed, which can initiate transcription.

It catalyses the reaction RNA(n) + a ribonucleoside 5'-triphosphate = RNA(n+1) + diphosphate. In terms of biological role, DNA-dependent RNA polymerase catalyzes the transcription of DNA into RNA using the four ribonucleoside triphosphates as substrates. The sequence is that of DNA-directed RNA polymerase subunit alpha from Hydrogenobaculum sp. (strain Y04AAS1).